The primary structure comprises 772 residues: Elongin-A (772 aa).

The region spanning 4–79 (ESALQVVEKL…AQWKKLVPVE (76 aa)) is the TFIIS N-terminal domain. Composition is skewed to basic and acidic residues over residues 79-105 (ERNA…LQKE) and 136-156 (LSEL…DERK). Disordered stretches follow at residues 79–403 (ERNA…FEQP) and 418–466 (KKKK…EKPA). Ser196 bears the Phosphoserine mark. Basic and acidic residues-rich tracts occupy residues 226-235 (QERHLGEPHG), 253-269 (RPVD…VSRE), 275-308 (LSKE…EGSS), 321-343 (SDNH…KSKQ), and 372-384 (PEGK…DRKS). Phosphoserine is present on residues Ser384 and Ser387. Thr394 is modified (phosphothreonine). Position 434 is an N6-acetyllysine (Lys434). Over residues 434–443 (KGLKKNDSKS) the composition is skewed to basic and acidic residues. The residue at position 516 (Ser516) is a Phosphoserine. The interval 522–681 (EAGFTGRRMN…PPRDVRRRQE (160 aa)) is activation domain. The BC-box stretch occupies residues 550-559 (TLHQQCIRVL). The 45-residue stretch at 566-610 (IFEVGGVPYSVLEPVLERCTPDQLYRIEEYNHVLIEETDQLWKVH) folds into the F-box domain. The interval 674–732 (RDVRRRQEKFGTGGAAVPEKIKIKPAPYPMGSSHASASSISFNPSPEEPAYDGPSTSSA) is disordered. The span at 705 to 714 (SSHASASSIS) shows a compositional bias: low complexity.

In terms of assembly, heterotrimer of an A (ELOA, ELOA2 or ELOA3P), ELOB and ELOC subunit. Part of a multisubunit ubiquitin ligase complex consisting of elongin BC complex (ELOB and ELOC), elongin A/ELOA, RBX1 and CUL5. Interacts with ERCC6; the interaction is induced by DNA damaging agents or inhibitors of RNA polymerase II elongation. Interacts (via BC-box) with CUL5.

The protein resides in the nucleus. Functionally, SIII, also known as elongin, is a general transcription elongation factor that increases the RNA polymerase II transcription elongation past template-encoded arresting sites. Subunit A is transcriptionally active and its transcription activity is strongly enhanced by binding to the dimeric complex of the SIII regulatory subunits B and C (elongin BC complex). In terms of biological role, as part of a multisubunit complex composed of elongin BC complex (ELOB and ELOC), elongin A/ELOA, RBX1 and CUL5; polyubiquitinates monoubiquitinated POLR2A. In Homo sapiens (Human), this protein is Elongin-A.